The primary structure comprises 217 residues: Glutathione S-transferase U20 (217 aa).

The GST N-terminal domain occupies 3–82 (NLPILLDYWP…YVDEAWPEKN (80 aa)). Glutathione contacts are provided by Ser-13, Ile-54, and Ser-67. Residues 88-208 (DPYGRAQARF…LPDSEKIVAY (121 aa)) enclose the GST C-terminal domain.

This sequence belongs to the GST superfamily. Tau family. As to quaternary structure, homodimerization. Interacts with JAR1/FIN219 under continuous far red (cFR) light to stimulate JAR1/FIN219 activity and substrate selectivity. In terms of tissue distribution, mostly associated with vascular tissues, especially near hydathodes.

It is found in the nucleus. Its subcellular location is the cytoplasm. The protein localises to the cytosol. It catalyses the reaction RX + glutathione = an S-substituted glutathione + a halide anion + H(+). With respect to regulation, activated by JAR1/FIN219. In terms of biological role, exhibits glutathione-dependent thiol transferase activities. Can use glutathione (GSH) and 1-chloro-2,4-dinitrobenzene (CDNB) as substrates. Involved in the regulation of far-red light influence on development. Regulator of the interplay between light and JA signaling by increasing JAR1/FIN219 efficiency. Maybe involved in gravitropic signal transduction. In Arabidopsis thaliana (Mouse-ear cress), this protein is Glutathione S-transferase U20.